Consider the following 451-residue polypeptide: Phosphoglucosamine mutase (451 aa).

Catalysis depends on serine 102, which acts as the Phosphoserine intermediate. Residues serine 102, aspartate 243, aspartate 245, and aspartate 247 each contribute to the Mg(2+) site. Serine 102 carries the phosphoserine modification.

This sequence belongs to the phosphohexose mutase family. Mg(2+) serves as cofactor. Post-translationally, activated by phosphorylation.

It carries out the reaction alpha-D-glucosamine 1-phosphate = D-glucosamine 6-phosphate. Its function is as follows. Catalyzes the conversion of glucosamine-6-phosphate to glucosamine-1-phosphate. The chain is Phosphoglucosamine mutase from Paramagnetospirillum magneticum (strain ATCC 700264 / AMB-1) (Magnetospirillum magneticum).